A 282-amino-acid chain; its full sequence is Endo-1,4-beta-xylanase B (282 aa).

The first 39 residues, 1–39, serve as a signal peptide directing secretion; that stretch reads MGISSILLSALIAGGALALPAAEPVSFDIRDENITLARR. An N-linked (GlcNAc...) asparagine glycan is attached at N33. One can recognise a GH11 domain in the interval 40–219; sequence AEAINYNQDY…GSGSGQISLS (180 aa). The Nucleophile role is filled by E117. Catalysis depends on E206, which acts as the Proton donor. The tract at residues 214–245 is disordered; that stretch reads GQISLSKGTGGGSTTTTPTGPTSTSTAPSSGG. The segment covering 227–243 has biased composition (low complexity); sequence TTTTPTGPTSTSTAPSS. Residues 246–282 enclose the CBM1 domain; that stretch reads TGAAQWGQCGGIGWTGPTTCVAPYTCKYENAYYSQCQ.

Belongs to the glycosyl hydrolase 11 (cellulase G) family.

Its subcellular location is the secreted. The enzyme catalyses Endohydrolysis of (1-&gt;4)-beta-D-xylosidic linkages in xylans.. It participates in glycan degradation; xylan degradation. Its activity is regulated as follows. Significantly inhibited by the wheat xylanase inhibiting protein I (XIP-I) and the proteinaceous endoxylanase Triticum aestivum xylanase inhibitors I (TAXI-I), but not TAXI-II. Functionally, endo-1,4-beta-xylanase involved in the hydrolysis of xylan, a major structural heterogeneous polysaccharide found in plant biomass representing the second most abundant polysaccharide in the biosphere, after cellulose. This is Endo-1,4-beta-xylanase B (xynB) from Talaromyces funiculosus (Fruitlet core rot fungus).